An 82-amino-acid polypeptide reads, in one-letter code: M-theraphotoxin-Gr1a (82 aa).

A signal peptide spans 1–21 (MKTSVVFVIAGLALLSVVCYA). Residues 22–46 (SELKEQSSVNEVLSTIFHFEQPEER) constitute a propeptide that is removed on maturation. 3 disulfides stabilise this stretch: Cys48-Cys63, Cys55-Cys69, and Cys62-Cys76. The residue at position 80 (Phe80) is a Phenylalanine amide.

Belongs to the neurotoxin 10 (Hwtx-1) family. 52 (MTx4) subfamily. Expressed by the venom gland.

It is found in the secreted. Functionally, this cationic hydrophobic peptide acts on a lot of different channels and has an antimicrobial activity. It blocks mechanosensitive ion channels (also named stretch-activated channels or SACs), without having effect on whole-cell voltage-sensitive currents. It also affects acetylcholine receptors (nAChRs) through interactions with membrane lipids by prolonging the closing time without affecting channel conductance or opening activity. It shows high affinity for lipid bilayers. It acts by partitioning into the membrane and perturbing the interface between the channel and the lipid bilayer without necessarily being in physical contact with the channel. It inhibits atrial fibrillation as well as the membrane motor of outer hair cells at low doses. It also binds to the voltage sensor of voltage-gated potassium channels from the archaebacterium Aeropyrum pernix (KvAP) without affecting channel gating. It also shows a low inhibition on a large spectra of sodium channels (Nav1.1/SCN1A, Nav1.2/SCN2A, Nav1.3/SCN3A, Nav1.4/SCN4A, Nav1.5/SCN5A, Nav1.6/SCN8A, Nav1.7/SCN9A) (IC(50)=7.4-14 uM), and potassium channels Kv11.1/KCNH2 and Kv11.2/KCNH6 (IC(50)=11 uM for both). It exhibits antimicrobial activities against the Gram-positive bacteria B.subtilis (MIC=0.5 uM), S.aureus (MIC=2-4 uM), and S.epidermidis (MIC=4-8 uM), and Gram-negative bacteria S.typhimurium (MIC=32.64 uM), P.aeruginosa (MIC=8-16 uM), and E.coli (MIC=8-16 uM). In Grammostola rosea (Chilean rose tarantula), this protein is M-theraphotoxin-Gr1a.